A 1527-amino-acid polypeptide reads, in one-letter code: uncharacterized protein (1527 aa).

4 coiled-coil regions span residues 262–293, 699–751, 905–932, and 1217–1255; these read NVEI…NINE, QQQQ…SEKL, NNLN…ENQI, and KIIS…QKSS. The disordered stretch occupies residues 683 to 734; that stretch reads TNQEQEQDQQDQPPPPQQQQEQQQEQQQQQEQQQQQDQQQQDQQQDQQEKQQ. Over residues 700-728 the composition is skewed to low complexity; sequence QQQEQQQEQQQQQEQQQQQDQQQQDQQQD.

This is an uncharacterized protein from Dictyostelium discoideum (Social amoeba).